Reading from the N-terminus, the 105-residue chain is Small ribosomal subunit protein uS10 (105 aa).

Belongs to the universal ribosomal protein uS10 family. In terms of assembly, part of the 30S ribosomal subunit.

Involved in the binding of tRNA to the ribosomes. In Rickettsia typhi (strain ATCC VR-144 / Wilmington), this protein is Small ribosomal subunit protein uS10.